Consider the following 538-residue polypeptide: RNA-binding protein RO60 (538 aa).

Methionine 1 is modified (N-acetylmethionine). 2 positions are modified to phosphoserine: serine 4 and serine 19. One can recognise a TROVE domain in the interval 16 to 369 (IANSQDGYVW…TFKTVEPTGK (354 aa)). The tract at residues 120 to 284 (RIPTHLFTFI…EMPLTALLRN (165 aa)) is RNA-binding. N6-acetyllysine is present on residues lysine 224 and lysine 359. The tract at residues 361–538 (FKTVEPTGKR…VIRNFTLDMI (178 aa)) is VWFA-like domain. The a divalent metal cation site is built by serine 378, serine 380, and threonine 445.

It belongs to the Ro 60 kDa family. As to quaternary structure, identified in a IGF2BP1-dependent mRNP granule complex containing untranslated mRNAs. Found in a complex with PUF60 and Y5 RNA. Interacts with RAB11FIP5.

It is found in the cytoplasm. In terms of biological role, RNA-binding protein that binds to misfolded non-coding RNAs, pre-5S rRNA, and several small cytoplasmic RNA molecules known as Y RNAs. Binds to endogenous Alu retroelements which are induced by type I interferon and stimulate porinflammatory cytokine secretion. Regulates the expression of Alu retroelements as well as inflammatory genes. May play roles in cilia formation and/or maintenance. The chain is RNA-binding protein RO60 from Homo sapiens (Human).